Here is a 298-residue protein sequence, read N- to C-terminus: Ethanolamine ammonia-lyase small subunit (298 aa).

A targets protein to the BMC region spans residues 1–19; it reads MDQKQIEEIVRSVMASMGQ. Positions 210, 231, and 261 each coordinate adenosylcob(III)alamin.

The protein belongs to the EutC family. The basic unit is a heterodimer which dimerizes to form tetramers. The heterotetramers trimerize; 6 large subunits form a core ring with 6 small subunits projecting outwards. Interacts with EutS, which targets it to the interior of the BMC. It depends on adenosylcob(III)alamin as a cofactor.

The protein localises to the bacterial microcompartment. It catalyses the reaction ethanolamine = acetaldehyde + NH4(+). It functions in the pathway amine and polyamine degradation; ethanolamine degradation. Functionally, catalyzes the deamination of various vicinal amino-alcohols to oxo compounds. It is spontaneously inactivated by its substrate and reactivated by EutA. May play a role in bacterial microcompartment (BMC) assembly or maintenance. Directly targeted to the BMC. Its function is as follows. Expression of the eut operon allows this bacteria to use ethanolamine (EA) as a carbon, nitrogen and energy source. It relies on cobalamin (vitamin B12) both as a cofactor for the ethanolamine ammonia-lyase activity and to induce the operon. EA enhances bacterial survival in macrophages in a concentration-dependent manner, suggesting it is an important nutrient during infection. This Salmonella typhimurium (strain LT2 / SGSC1412 / ATCC 700720) protein is Ethanolamine ammonia-lyase small subunit.